The sequence spans 123 residues: Large ribosomal subunit protein bL12 (123 aa).

It belongs to the bacterial ribosomal protein bL12 family. Homodimer. Part of the ribosomal stalk of the 50S ribosomal subunit. Forms a multimeric L10(L12)X complex, where L10 forms an elongated spine to which 2 to 4 L12 dimers bind in a sequential fashion. Binds GTP-bound translation factors.

Forms part of the ribosomal stalk which helps the ribosome interact with GTP-bound translation factors. Is thus essential for accurate translation. This chain is Large ribosomal subunit protein bL12, found in Dechloromonas aromatica (strain RCB).